The sequence spans 209 residues: Uracil phosphoribosyltransferase (209 aa).

Residues arginine 79, arginine 104, and 131–139 (DPMLATGGS) contribute to the 5-phospho-alpha-D-ribose 1-diphosphate site. Uracil is bound by residues valine 194 and 199–201 (GDA). Aspartate 200 serves as a coordination point for 5-phospho-alpha-D-ribose 1-diphosphate.

The protein belongs to the UPRTase family. The cofactor is Mg(2+).

The catalysed reaction is UMP + diphosphate = 5-phospho-alpha-D-ribose 1-diphosphate + uracil. It participates in pyrimidine metabolism; UMP biosynthesis via salvage pathway; UMP from uracil: step 1/1. With respect to regulation, allosterically activated by GTP. Its function is as follows. Catalyzes the conversion of uracil and 5-phospho-alpha-D-ribose 1-diphosphate (PRPP) to UMP and diphosphate. The polypeptide is Uracil phosphoribosyltransferase (Bacillus mycoides (strain KBAB4) (Bacillus weihenstephanensis)).